The chain runs to 586 residues: NudC domain-containing protein 1 (586 aa).

Positions 259 to 278 are disordered; it reads KDQPESSEDEKMDEDNKREP. Positions 275–364 constitute a CS domain; sequence KREPLYNWHQ…EPGSTWAELV (90 aa).

Its subcellular location is the cytoplasm. It localises to the nucleus. The polypeptide is NudC domain-containing protein 1 (Xenopus tropicalis (Western clawed frog)).